The primary structure comprises 100 residues: Large ribosomal subunit protein uL23 (100 aa).

The protein belongs to the universal ribosomal protein uL23 family. In terms of assembly, part of the 50S ribosomal subunit. Contacts protein L29, and trigger factor when it is bound to the ribosome.

One of the early assembly proteins it binds 23S rRNA. One of the proteins that surrounds the polypeptide exit tunnel on the outside of the ribosome. Forms the main docking site for trigger factor binding to the ribosome. This Novosphingobium aromaticivorans (strain ATCC 700278 / DSM 12444 / CCUG 56034 / CIP 105152 / NBRC 16084 / F199) protein is Large ribosomal subunit protein uL23.